Here is an 85-residue protein sequence, read N- to C-terminus: Large ribosomal subunit protein bL27 (85 aa).

The segment at 1–25 (MAHKKAGGSSRNGRDSHSKRLGVKH) is disordered.

The protein belongs to the bacterial ribosomal protein bL27 family.

The chain is Large ribosomal subunit protein bL27 from Buchnera aphidicola subsp. Baizongia pistaciae (strain Bp).